Reading from the N-terminus, the 498-residue chain is Fascin-3 (498 aa).

The protein belongs to the fascin family. As to expression, expressed in testis.

It is found in the cytoplasm. The protein resides in the cytoskeleton. Acts as an actin bundling protein. This Mus musculus (Mouse) protein is Fascin-3 (Fscn3).